Here is a 348-residue protein sequence, read N- to C-terminus: MAEKVLVTGGAGYIGSHTVLELLEAGYSPMVIDNFHNAIRGGGSMPESLRRVQDLTGRSVEFEEMDILDQAALQRLFKKHSFMAVIHFAGLKAVGESVQKPLDYYRVNLTGTIQLLEIMRAHGVKNLVFSSSATVYGNPQYLPLDEAHPTGGCTNPYGKSKFFIEEMIRDLCQADKAWNAVLLRYFNPIGAHASGCIGEDPQGIPNNLMPYVSQVAIGRREVLNVFGNDYDTEDGTGVRDYIHVVDLAKGHIAALRKLKEQCGCRIYNLGTGTGYSVLQMVQAMEKASGKKIPYKVVARREGDVAACYANPSLALKELGWSAALGLDRMCEDLWRWQKQNPSGFGTQA.

NAD(+)-binding positions include Gly-12 to Ile-14, Asp-33 to Asn-37, Asp-66 to Ile-67, Phe-88, and Lys-92. Ser-132 to Thr-134 contacts substrate. Tyr-157 serves as the catalytic Proton acceptor. Positions 161 and 185 each coordinate NAD(+). Residues Tyr-185 to Asn-187, Asn-206 to Leu-208, Asn-224 to Phe-226, Arg-239, and Arg-300 to Asp-303 each bind substrate.

The protein belongs to the NAD(P)-dependent epimerase/dehydratase family. In terms of assembly, homodimer. It depends on NAD(+) as a cofactor.

It catalyses the reaction UDP-alpha-D-glucose = UDP-alpha-D-galactose. It carries out the reaction UDP-N-acetyl-alpha-D-glucosamine = UDP-N-acetyl-alpha-D-galactosamine. Its pathway is carbohydrate metabolism; galactose metabolism. Catalyzes two distinct but analogous reactions: the reversible epimerization of UDP-glucose to UDP-galactose and the reversible epimerization of UDP-N-acetylglucosamine to UDP-N-acetylgalactosamine. The reaction with UDP-Gal plays a critical role in the Leloir pathway of galactose catabolism in which galactose is converted to the glycolytic intermediate glucose 6-phosphate. It contributes to the catabolism of dietary galactose and enables the endogenous biosynthesis of both UDP-Gal and UDP-GalNAc when exogenous sources are limited. Both UDP-sugar interconversions are important in the synthesis of glycoproteins and glycolipids. This Bos taurus (Bovine) protein is UDP-glucose 4-epimerase.